We begin with the raw amino-acid sequence, 253 residues long: 5'/3'-nucleotidase SurE (253 aa).

A divalent metal cation contacts are provided by D8, D9, S39, and N92.

This sequence belongs to the SurE nucleotidase family. A divalent metal cation serves as cofactor.

It is found in the cytoplasm. The enzyme catalyses a ribonucleoside 5'-phosphate + H2O = a ribonucleoside + phosphate. The catalysed reaction is a ribonucleoside 3'-phosphate + H2O = a ribonucleoside + phosphate. It catalyses the reaction [phosphate](n) + H2O = [phosphate](n-1) + phosphate + H(+). Nucleotidase with a broad substrate specificity as it can dephosphorylate various ribo- and deoxyribonucleoside 5'-monophosphates and ribonucleoside 3'-monophosphates with highest affinity to 3'-AMP. Also hydrolyzes polyphosphate (exopolyphosphatase activity) with the preference for short-chain-length substrates (P20-25). Might be involved in the regulation of dNTP and NTP pools, and in the turnover of 3'-mononucleotides produced by numerous intracellular RNases (T1, T2, and F) during the degradation of various RNAs. This chain is 5'/3'-nucleotidase SurE, found in Klebsiella pneumoniae (strain 342).